The chain runs to 627 residues: Ski protein homolog (627 aa).

Positions 1-12 (MSDSPIGSSQQV) are enriched in polar residues. Disordered stretches follow at residues 1–22 (MSDSPIGSSQQVEPEHRTPDLM), 34–58 (LHEETRSDDDDDGQPSTSAKRKDSR), and 299–318 (EYDEAAPHQAPPKRPAMETP).

It belongs to the SKI family. In terms of assembly, may interact with daf-3. Expressed in ganglia in the head and tail and in the anterior pharynx.

The protein localises to the nucleus. In terms of biological role, probable component of transcriptional regulatory complex with SMAD protein daf-3. Required to regulate entry into a developmentally arrested larval state known as dauer, in response to harsh environmental conditions. Involved in larvae undergoing cell-cycle arrest during the dauer stage. The sequence is that of Ski protein homolog from Caenorhabditis elegans.